Reading from the N-terminus, the 127-residue chain is Large-conductance mechanosensitive channel (127 aa).

3 helical membrane passes run 8–28, 30–50, and 70–90; these read FAFKGNVLDLAIGVIIGAAFG, IVTALVDVVIMPIISIILSLI, and IGVLIKTIIEFLIIAFVLFLF.

Belongs to the MscL family. Homopentamer.

Its subcellular location is the cell membrane. Its function is as follows. Channel that opens in response to stretch forces in the membrane lipid bilayer. May participate in the regulation of osmotic pressure changes within the cell. This Herpetosiphon aurantiacus (strain ATCC 23779 / DSM 785 / 114-95) protein is Large-conductance mechanosensitive channel.